Reading from the N-terminus, the 202-residue chain is Large ribosomal subunit protein bL25 (202 aa).

It belongs to the bacterial ribosomal protein bL25 family. CTC subfamily. As to quaternary structure, part of the 50S ribosomal subunit; part of the 5S rRNA/L5/L18/L25 subcomplex. Contacts the 5S rRNA. Binds to the 5S rRNA independently of L5 and L18.

In terms of biological role, this is one of the proteins that binds to the 5S RNA in the ribosome where it forms part of the central protuberance. The protein is Large ribosomal subunit protein bL25 of Rickettsia bellii (strain OSU 85-389).